The sequence spans 122 residues: Large ribosomal subunit protein uL14 (122 aa).

The protein belongs to the universal ribosomal protein uL14 family. Part of the 50S ribosomal subunit. Forms a cluster with proteins L3 and L19. In the 70S ribosome, L14 and L19 interact and together make contacts with the 16S rRNA in bridges B5 and B8.

Binds to 23S rRNA. Forms part of two intersubunit bridges in the 70S ribosome. This chain is Large ribosomal subunit protein uL14, found in Acidothermus cellulolyticus (strain ATCC 43068 / DSM 8971 / 11B).